We begin with the raw amino-acid sequence, 244 residues long: Probable ABC transporter ATP-binding protein in ycf23-apcF intergenic region (244 aa).

An ABC transporter domain is found at 9 to 241; that stretch reads LEINNLTVSY…KLSTLFGEHI (233 aa). 41 to 48 provides a ligand contact to ATP; sequence GPNGAGKS.

Belongs to the ABC transporter superfamily.

It localises to the plastid. The protein resides in the cyanelle. This chain is Probable ABC transporter ATP-binding protein in ycf23-apcF intergenic region, found in Cyanophora paradoxa.